The sequence spans 310 residues: Haloalkane dehalogenase (310 aa).

The 111-residue stretch at 30–140 folds into the AB hydrolase-1 domain; that stretch reads PVVLFLHGNP…PMPTWQDFHH (111 aa). The active-site Nucleophile is the Asp-103. Catalysis depends on Glu-127, which acts as the Proton donor. His-280 acts as the Proton acceptor in catalysis.

Belongs to the haloalkane dehalogenase family. Type 2 subfamily. As to quaternary structure, monomer.

It carries out the reaction 1-haloalkane + H2O = a halide anion + a primary alcohol + H(+). Its function is as follows. Catalyzes hydrolytic cleavage of carbon-halogen bonds in halogenated aliphatic compounds, leading to the formation of the corresponding primary alcohols, halide ions and protons. This is Haloalkane dehalogenase from Bradyrhizobium diazoefficiens (strain JCM 10833 / BCRC 13528 / IAM 13628 / NBRC 14792 / USDA 110).